We begin with the raw amino-acid sequence, 625 residues long: 1,4-alpha-glucan branching enzyme GlgB (625 aa).

Aspartate 302 acts as the Nucleophile in catalysis. Residue glutamate 355 is the Proton donor of the active site.

This sequence belongs to the glycosyl hydrolase 13 family. GlgB subfamily. As to quaternary structure, monomer.

The enzyme catalyses Transfers a segment of a (1-&gt;4)-alpha-D-glucan chain to a primary hydroxy group in a similar glucan chain.. It participates in glycan biosynthesis; glycogen biosynthesis. Its function is as follows. Catalyzes the formation of the alpha-1,6-glucosidic linkages in glycogen by scission of a 1,4-alpha-linked oligosaccharide from growing alpha-1,4-glucan chains and the subsequent attachment of the oligosaccharide to the alpha-1,6 position. The protein is 1,4-alpha-glucan branching enzyme GlgB of Albidiferax ferrireducens (strain ATCC BAA-621 / DSM 15236 / T118) (Rhodoferax ferrireducens).